The following is a 333-amino-acid chain: Photosystem II assembly lipoprotein Ycf48 (333 aa).

An N-terminal signal peptide occupies residues 1-23 (MNRLLSSAVNLLLVLVLGVGLSG). A lipid anchor (N-palmitoyl cysteine) is attached at Cys24. Cys24 carries S-diacylglycerol cysteine lipidation.

It belongs to the Ycf48 family. Part of early PSII assembly complexes which includes D1 (psbA) and PsbI; not found in mature PSII. Binds to the lumenal side of PSII complexes. Interacts with YidC.

It localises to the cellular thylakoid membrane. Functionally, a factor required for optimal assembly of photosystem II (PSII), acting in the early stages of PSII assembly. Also plays a role in replacement of photodamaged D1 (psbA). Assists YidC in synthesis of chlorophyll-binding proteins. The chain is Photosystem II assembly lipoprotein Ycf48 from Synechococcus sp. (strain CC9902).